The chain runs to 1043 residues: F-box DNA helicase 1 (1043 aa).

Positions 30 to 56 (QRWTNRDPNHGLYPKPRTKRGSRGQGS) are disordered. The short motif at 57–64 (QRCIPEFF) is the PIP-box element. The disordered stretch occupies residues 101–191 (CALPQEGSAG…QDAGDVGPDP (91 aa)). Phosphoserine is present on Ser-124. The F-box domain occupies 138–184 (SRWDGVSKKAPRHHLSVPCTRPREARQEAEDSTSRLSAESGETDQDA). Residues 158-170 (RPREARQEAEDST) are compositionally biased toward basic and acidic residues. One can recognise a UvrD-like helicase ATP-binding domain in the interval 442 to 705 (THEQQLILNH…FYLTQSFRFG (264 aa)). 463-470 (AFAGTGKT) contacts ATP. Positions 807–811 (KFIRR) match the APIM motif motif.

It belongs to the helicase family. UvrD subfamily. As to quaternary structure, part of the SCF (SKP1-CUL1-F-box) E3 ubiquitin-protein ligase complex SCF(FBH1) composed of CUL1, SKP1, RBX1 and FBH1. Interacts with RAD51. Interacts with RPA2. Interacts (via PIP-box and RanBP2-type zinc finger) with PCNA. Ubiquitinated. Ubiquitination by the DCX(DTL) complex, also named CRL4(CDT2), leading to its degradation: ubiquitination takes place after its localization to DNA damage sites, possibly to facilitate the translesion synthesis (TLS) pathway.

The protein resides in the nucleus. Its subcellular location is the chromosome. The enzyme catalyses Couples ATP hydrolysis with the unwinding of duplex DNA by translocating in the 3'-5' direction.. It catalyses the reaction ATP + H2O = ADP + phosphate + H(+). It functions in the pathway protein modification; protein ubiquitination. Functionally, 3'-5' DNA helicase and substrate-recognition component of the SCF(FBH1) E3 ubiquitin ligase complex that plays a key role in response to stalled/damaged replication forks. Involved in genome maintenance by acting as an anti-recombinogenic helicase and preventing extensive strand exchange during homologous recombination: promotes RAD51 filament dissolution from stalled forks, thereby inhibiting homologous recombination and preventing excessive recombination. Also promotes cell death and DNA double-strand breakage in response to replication stress: together with MUS81, promotes the endonucleolytic DNA cleavage following prolonged replication stress via its helicase activity, possibly to eliminate cells with excessive replication stress. Plays a major role in remodeling of stalled DNA forks by catalyzing fork regression, in which the fork reverses and the two nascent DNA strands anneal. In addition to the helicase activity, also acts as the substrate-recognition component of the SCF(FBH1) E3 ubiquitin ligase complex, a complex that mediates ubiquitination of RAD51, leading to regulate RAD51 subcellular location. This chain is F-box DNA helicase 1, found in Homo sapiens (Human).